The primary structure comprises 424 residues: 5-methylthioadenosine/S-adenosylhomocysteine deaminase (424 aa).

Zn(2+)-binding residues include H60 and H62. Substrate is bound by residues E89 and H181. Residue H208 participates in Zn(2+) binding. Positions 211 and 296 each coordinate substrate. D296 lines the Zn(2+) pocket.

Belongs to the metallo-dependent hydrolases superfamily. MTA/SAH deaminase family. Zn(2+) serves as cofactor.

The enzyme catalyses S-adenosyl-L-homocysteine + H2O + H(+) = S-inosyl-L-homocysteine + NH4(+). It carries out the reaction S-methyl-5'-thioadenosine + H2O + H(+) = S-methyl-5'-thioinosine + NH4(+). Its function is as follows. Catalyzes the deamination of 5-methylthioadenosine and S-adenosyl-L-homocysteine into 5-methylthioinosine and S-inosyl-L-homocysteine, respectively. Is also able to deaminate adenosine. This chain is 5-methylthioadenosine/S-adenosylhomocysteine deaminase, found in Thermococcus kodakarensis (strain ATCC BAA-918 / JCM 12380 / KOD1) (Pyrococcus kodakaraensis (strain KOD1)).